The following is a 614-amino-acid chain: Bifunctional enzyme CysN/CysC (614 aa).

The segment at 1 to 441 (MTTLLRLATA…SLVTAQDRPP (441 aa)) is sulfate adenylyltransferase. The region spanning 2-217 (TTLLRLATAG…DVYIAGDRNM (216 aa)) is the tr-type G domain. Positions 11 to 18 (GSVDDGKS) are G1. 11–18 (GSVDDGKS) is a binding site for GTP. Residues 67-71 (GITID) form a G2 region. The tract at residues 88 to 91 (DTPG) is G3. Residues 88-92 (DTPGH) and 143-146 (NKMD) each bind GTP. The interval 143–146 (NKMD) is G4. The G5 stretch occupies residues 180–182 (SAL). The adenylyl-sulfate kinase stretch occupies residues 442–614 (RGKTVWFTGL…EVIDLLESSS (173 aa)). 450–457 (GLSGSGKS) contacts ATP. The active-site Phosphoserine intermediate is the S524. Positions 578–597 (GIDSPYQRPKNPDLRLTPDR) are disordered. Over residues 587 to 597 (KNPDLRLTPDR) the composition is skewed to basic and acidic residues.

It in the C-terminal section; belongs to the APS kinase family. In the N-terminal section; belongs to the TRAFAC class translation factor GTPase superfamily. Classic translation factor GTPase family. CysN/NodQ subfamily. Heterodimer composed of CysD, the smaller subunit, and CysNC.

The catalysed reaction is sulfate + ATP + H(+) = adenosine 5'-phosphosulfate + diphosphate. The enzyme catalyses adenosine 5'-phosphosulfate + ATP = 3'-phosphoadenylyl sulfate + ADP + H(+). The protein operates within sulfur metabolism; hydrogen sulfide biosynthesis; sulfite from sulfate: step 1/3. It participates in sulfur metabolism; hydrogen sulfide biosynthesis; sulfite from sulfate: step 2/3. Functionally, with CysD forms the ATP sulfurylase (ATPS) that catalyzes the adenylation of sulfate producing adenosine 5'-phosphosulfate (APS) and diphosphate, the first enzymatic step in sulfur assimilation pathway. APS synthesis involves the formation of a high-energy phosphoric-sulfuric acid anhydride bond driven by GTP hydrolysis by CysN coupled to ATP hydrolysis by CysD. Its function is as follows. APS kinase catalyzes the synthesis of activated sulfate. The sequence is that of Bifunctional enzyme CysN/CysC (cysNC) from Mycobacterium tuberculosis (strain CDC 1551 / Oshkosh).